The primary structure comprises 89 residues: Cell division topological specificity factor (89 aa).

Belongs to the MinE family.

Its function is as follows. Prevents the cell division inhibition by proteins MinC and MinD at internal division sites while permitting inhibition at polar sites. This ensures cell division at the proper site by restricting the formation of a division septum at the midpoint of the long axis of the cell. The polypeptide is Cell division topological specificity factor (Laribacter hongkongensis (strain HLHK9)).